Consider the following 1001-residue polypeptide: DNA topoisomerase 3-alpha (1001 aa).

In terms of domain architecture, Toprim spans 35–179; that stretch reads KVLCVAEKND…NLQVLRARFS (145 aa). Residues 197 to 617 form the Topo IA-type catalytic domain; it reads DQRVSDAVDV…QQVQKYKQVF (421 aa). Tyr362 serves as the catalytic O-(5'-phospho-DNA)-tyrosine intermediate. Positions 400–424 are disordered; the sequence is GGPTPRNGNKSDQAHPPIHPTKYTN. The segment at 658 to 685 adopts a C4-type zinc-finger fold; it reads CPQCNKDMVLKTKKNGGFYLSCMGFPEC. A compositionally biased stretch (polar residues) spans 774–792; it reads RMDNSQHPQPADSRQTGSS. The segment at 774 to 810 is disordered; the sequence is RMDNSQHPQPADSRQTGSSKALAQTLPPPTAAGESNS. Residues Cys813, Cys815, Cys838, Cys843, Cys897, Cys899, Cys922, and Cys930 each coordinate Zn(2+). 2 consecutive GRF-type zinc fingers follow at residues 813 to 852 and 897 to 939; these read CNCG…ADSP and CLCS…VDEN. A disordered region spans residues 937-1001; the sequence is DENTAPGTSG…HTRPFCPQNR (65 aa). The segment covering 953–964 has biased composition (basic and acidic residues); it reads DRGRTLESEARS.

Belongs to the type IA topoisomerase family. As to quaternary structure, binds ssDNA. Interacts (via N-terminal region) with BLM; the interaction is direct. Directly interacts with RMI1. Component of the RMI complex, containing at least TOP3A, RMI1 and RMI2. The RMI complex interacts with BLM. Mg(2+) serves as cofactor. As to expression, high expression is found in testis, heart, skeletal muscle and pancreas.

It is found in the mitochondrion matrix. The catalysed reaction is ATP-independent breakage of single-stranded DNA, followed by passage and rejoining.. Releases the supercoiling and torsional tension of DNA introduced during the DNA replication and transcription by transiently cleaving and rejoining one strand of the DNA duplex. Introduces a single-strand break via transesterification at a target site in duplex DNA. The scissile phosphodiester is attacked by the catalytic tyrosine of the enzyme, resulting in the formation of a DNA-(5'-phosphotyrosyl)-enzyme intermediate and the expulsion of a 3'-OH DNA strand. The free DNA strand then undergoes passage around the unbroken strand thus removing DNA supercoils. Finally, in the religation step, the DNA 3'-OH attacks the covalent intermediate to expel the active-site tyrosine and restore the DNA phosphodiester backbone. As an essential component of the RMI complex it is involved in chromosome separation and the processing of homologous recombination intermediates to limit DNA crossover formation in cells. Has DNA decatenation activity. It is required for mtDNA decatenation and segregation after completion of replication, in a process that does not require BLM, RMI1 and RMI2. The polypeptide is DNA topoisomerase 3-alpha (TOP3A) (Homo sapiens (Human)).